We begin with the raw amino-acid sequence, 495 residues long: Glutamate--tRNA ligase (495 aa).

The 'HIGH' region signature appears at Pro-12 to Asn-22. Positions Lys-259–Arg-263 match the 'KMSKS' region motif. Lys-262 contributes to the ATP binding site.

It belongs to the class-I aminoacyl-tRNA synthetase family. Glutamate--tRNA ligase type 1 subfamily. In terms of assembly, monomer.

The protein localises to the cytoplasm. It catalyses the reaction tRNA(Glu) + L-glutamate + ATP = L-glutamyl-tRNA(Glu) + AMP + diphosphate. In terms of biological role, catalyzes the attachment of glutamate to tRNA(Glu) in a two-step reaction: glutamate is first activated by ATP to form Glu-AMP and then transferred to the acceptor end of tRNA(Glu). The chain is Glutamate--tRNA ligase from Latilactobacillus sakei subsp. sakei (strain 23K) (Lactobacillus sakei subsp. sakei).